Here is a 658-residue protein sequence, read N- to C-terminus: DNA ligase (658 aa).

NAD(+) contacts are provided by residues 31-35 (DFEYD), 80-81 (SL), and Glu110. The active-site N6-AMP-lysine intermediate is the Lys112. NAD(+) contacts are provided by Arg133, Glu167, Lys279, and Lys303. Residues Cys397, Cys400, Cys415, and Cys420 each coordinate Zn(2+). The region spanning 584–654 (DTASIYFQKS…KALNIPIINE (71 aa)) is the BRCT domain.

The protein belongs to the NAD-dependent DNA ligase family. LigA subfamily. Mg(2+) is required as a cofactor. Mn(2+) serves as cofactor.

It carries out the reaction NAD(+) + (deoxyribonucleotide)n-3'-hydroxyl + 5'-phospho-(deoxyribonucleotide)m = (deoxyribonucleotide)n+m + AMP + beta-nicotinamide D-nucleotide.. Functionally, DNA ligase that catalyzes the formation of phosphodiester linkages between 5'-phosphoryl and 3'-hydroxyl groups in double-stranded DNA using NAD as a coenzyme and as the energy source for the reaction. It is essential for DNA replication and repair of damaged DNA. This Mycoplasma pneumoniae (strain ATCC 29342 / M129 / Subtype 1) (Mycoplasmoides pneumoniae) protein is DNA ligase.